Consider the following 111-residue polypeptide: COX assembly mitochondrial protein (111 aa).

In terms of domain architecture, CHCH spans Y39–E82. 2 short sequence motifs (cx9C motif) span residues C42–C52 and C64–C74. 2 disulfide bridges follow: C42/C74 and C52/C64.

It belongs to the CMC family.

Its subcellular location is the mitochondrion inner membrane. Functionally, required for mitochondrial cytochrome c oxidase (COX) assembly and respiration. Binds copper. May be involved in copper trafficking and distribution to mitochondrial COX and SOD1. This Saccharomyces cerevisiae (strain RM11-1a) (Baker's yeast) protein is COX assembly mitochondrial protein (CMC1).